The sequence spans 265 residues: tRNA (guanine-N(1)-)-methyltransferase (265 aa).

Residues Gly-110 and 129–134 (LGDFVM) contribute to the S-adenosyl-L-methionine site. The interval 243 to 265 (LAAWGAPPPPLPKRRRGAKPNPN) is disordered. Residues 254 to 265 (PKRRRGAKPNPN) are compositionally biased toward basic residues.

Belongs to the RNA methyltransferase TrmD family. In terms of assembly, homodimer.

It localises to the cytoplasm. It catalyses the reaction guanosine(37) in tRNA + S-adenosyl-L-methionine = N(1)-methylguanosine(37) in tRNA + S-adenosyl-L-homocysteine + H(+). In terms of biological role, specifically methylates guanosine-37 in various tRNAs. This Deinococcus geothermalis (strain DSM 11300 / CIP 105573 / AG-3a) protein is tRNA (guanine-N(1)-)-methyltransferase.